A 297-amino-acid polypeptide reads, in one-letter code: MEPRALVTALSLGLSLCSLGLLVTAIFTDHWYETDPRRHKESCERSRAGADPPDQKNRLMPLSHLPLRDSPPLGRRLLPGGPGRSDPESWRSLLGLGGLDAECGRPLFATYSGLWRKCYFLGIDRDIDTLILKGIAQRCTAIKYHFSQPIRLRNIPFNLTKTIQQDEWHLLHLRRITAGFLGMAVAVLLCGCIVATVSFFWEESLTQHVAGLLFLMTGIFCTISLCTYAASVSYDLNRVPKLIYSLPHDVEHGYSWSIFCAWCSLGFIVAAGGLCIAYPFISRTKIAHLKSGRDSTV.

Positions 1–25 (MEPRALVTALSLGLSLCSLGLLVTA) are cleaved as a signal peptide. The Extracellular portion of the chain corresponds to 26–179 (IFTDHWYETD…LLHLRRITAG (154 aa)). The span at 41 to 57 (ESCERSRAGADPPDQKN) shows a compositional bias: basic and acidic residues. The interval 41–86 (ESCERSRAGADPPDQKNRLMPLSHLPLRDSPPLGRRLLPGGPGRSD) is disordered. Positions 68–79 (RDSPPLGRRLLP) are enriched in low complexity. An N-linked (GlcNAc...) asparagine glycan is attached at Asn158. Residues 180 to 200 (FLGMAVAVLLCGCIVATVSFF) form a helical membrane-spanning segment. Residues 201–208 (WEESLTQH) lie on the Cytoplasmic side of the membrane. The chain crosses the membrane as a helical span at residues 209–229 (VAGLLFLMTGIFCTISLCTYA). Topologically, residues 230–257 (ASVSYDLNRVPKLIYSLPHDVEHGYSWS) are extracellular. Residues 258 to 278 (IFCAWCSLGFIVAAGGLCIAY) form a helical membrane-spanning segment. Residues 279–297 (PFISRTKIAHLKSGRDSTV) are Cytoplasmic-facing.

Belongs to the TMEM178 family. As to quaternary structure, interacts with STIM1. In terms of tissue distribution, highly expressed in the bone and its expression increases during osteoclastogenesis.

It is found in the endoplasmic reticulum membrane. In terms of biological role, acts as a negative regulator of osteoclast differentiation in basal and inflammatory conditions by regulating TNFSF11-induced Ca (2+) fluxes, thereby controlling the induction of NFATC1. In Mus musculus (Mouse), this protein is Transmembrane protein 178A (Tmem178a).